We begin with the raw amino-acid sequence, 490 residues long: Transmembrane protein 185-like (490 aa).

Positions 1–31 are enriched in low complexity; that stretch reads MIENENTSLLSTSSSSTSSSPNNANSPSSLN. Disordered regions lie at residues 1 to 151 and 455 to 490; these read MIEN…SKYK and NMINNQDSSESESDDETEVSFKDREDEESEKLISNL. The segment covering 47-59 has biased composition (polar residues); that stretch reads TSGNNSPSAQITK. 2 stretches are compositionally biased toward low complexity: residues 66-80 and 89-108; these read SNNSSRNSSRPNSRS and NNNNNNNNNNNNNNNNNNIN. Positions 109–125 are enriched in polar residues; it reads KHNSIVYNKSNNKLNSI. Gly residues predominate over residues 133–145; it reads QGGGGGNGNGNGN. The span at 463–472 shows a compositional bias: acidic residues; sequence SESESDDETE.

It belongs to the TMEM185 family.

The chain is Transmembrane protein 185-like from Dictyostelium discoideum (Social amoeba).